A 156-amino-acid chain; its full sequence is 6,7-dimethyl-8-ribityllumazine synthase (156 aa).

5-amino-6-(D-ribitylamino)uracil is bound by residues Phe-25, 59–61 (AFE), and 83–85 (AVI). 88 to 89 (GT) contributes to the (2S)-2-hydroxy-3-oxobutyl phosphate binding site. His-91 functions as the Proton donor in the catalytic mechanism. Phe-116 lines the 5-amino-6-(D-ribitylamino)uracil pocket. Residue Arg-130 participates in (2S)-2-hydroxy-3-oxobutyl phosphate binding.

The protein belongs to the DMRL synthase family.

The enzyme catalyses (2S)-2-hydroxy-3-oxobutyl phosphate + 5-amino-6-(D-ribitylamino)uracil = 6,7-dimethyl-8-(1-D-ribityl)lumazine + phosphate + 2 H2O + H(+). Its pathway is cofactor biosynthesis; riboflavin biosynthesis; riboflavin from 2-hydroxy-3-oxobutyl phosphate and 5-amino-6-(D-ribitylamino)uracil: step 1/2. In terms of biological role, catalyzes the formation of 6,7-dimethyl-8-ribityllumazine by condensation of 5-amino-6-(D-ribitylamino)uracil with 3,4-dihydroxy-2-butanone 4-phosphate. This is the penultimate step in the biosynthesis of riboflavin. In Desulfovibrio desulfuricans (strain ATCC 27774 / DSM 6949 / MB), this protein is 6,7-dimethyl-8-ribityllumazine synthase.